The primary structure comprises 873 residues: Bifunctional uridylyltransferase/uridylyl-removing enzyme (873 aa).

The uridylyltransferase stretch occupies residues methionine 1–isoleucine 332. The interval isoleucine 333 to threonine 692 is uridylyl-removing. Residues valine 451–leucine 573 enclose the HD domain. ACT domains are found at residues glutamate 693–arginine 777 and leucine 800–serine 873.

This sequence belongs to the GlnD family. Mg(2+) is required as a cofactor.

The catalysed reaction is [protein-PII]-L-tyrosine + UTP = [protein-PII]-uridylyl-L-tyrosine + diphosphate. It carries out the reaction [protein-PII]-uridylyl-L-tyrosine + H2O = [protein-PII]-L-tyrosine + UMP + H(+). Its activity is regulated as follows. Uridylyltransferase (UTase) activity is inhibited by glutamine, while glutamine activates uridylyl-removing (UR) activity. Its function is as follows. Modifies, by uridylylation and deuridylylation, the PII regulatory proteins (GlnB and homologs), in response to the nitrogen status of the cell that GlnD senses through the glutamine level. Under low glutamine levels, catalyzes the conversion of the PII proteins and UTP to PII-UMP and PPi, while under higher glutamine levels, GlnD hydrolyzes PII-UMP to PII and UMP (deuridylylation). Thus, controls uridylylation state and activity of the PII proteins, and plays an important role in the regulation of nitrogen assimilation and metabolism. In Aliivibrio fischeri (strain ATCC 700601 / ES114) (Vibrio fischeri), this protein is Bifunctional uridylyltransferase/uridylyl-removing enzyme.